The following is a 138-amino-acid chain: Large ribosomal subunit protein uL16 (138 aa).

The protein belongs to the universal ribosomal protein uL16 family. Part of the 50S ribosomal subunit.

Functionally, binds 23S rRNA and is also seen to make contacts with the A and possibly P site tRNAs. The polypeptide is Large ribosomal subunit protein uL16 (Syntrophobacter fumaroxidans (strain DSM 10017 / MPOB)).